A 348-amino-acid polypeptide reads, in one-letter code: Uroporphyrinogen decarboxylase (348 aa).

Substrate-binding positions include 28-32, Asp78, Tyr154, Thr209, and His325; that span reads RQAGR.

Belongs to the uroporphyrinogen decarboxylase family. In terms of assembly, homodimer.

It is found in the cytoplasm. The enzyme catalyses uroporphyrinogen III + 4 H(+) = coproporphyrinogen III + 4 CO2. Its pathway is porphyrin-containing compound metabolism; protoporphyrin-IX biosynthesis; coproporphyrinogen-III from 5-aminolevulinate: step 4/4. In terms of biological role, catalyzes the decarboxylation of four acetate groups of uroporphyrinogen-III to yield coproporphyrinogen-III. The polypeptide is Uroporphyrinogen decarboxylase (Rhodopseudomonas palustris (strain HaA2)).